Here is a 41-residue protein sequence, read N- to C-terminus: Large ribosomal subunit protein bL36 (41 aa).

This sequence belongs to the bacterial ribosomal protein bL36 family.

The sequence is that of Large ribosomal subunit protein bL36 from Hyphomonas neptunium (strain ATCC 15444).